We begin with the raw amino-acid sequence, 492 residues long: Acetyl-coenzyme A carboxylase carboxyl transferase subunit beta, chloroplastic (492 aa).

Residues 198 to 219 form a disordered region; it reads STNGSDLTISESSNESESSNES. Residues 228–492 form the CoA carboxyltransferase N-terminal domain; the sequence is LWVQCENCYG…FHGRFPLNQN (265 aa). C232, C235, C251, and C254 together coordinate Zn(2+). Residues 232–254 form a C4-type zinc finger; it reads CENCYGLNYKKFLKSKMYLCEQC.

Belongs to the AccD/PCCB family. As to quaternary structure, acetyl-CoA carboxylase is a heterohexamer composed of biotin carboxyl carrier protein, biotin carboxylase and 2 subunits each of ACCase subunit alpha and ACCase plastid-coded subunit beta (accD). Requires Zn(2+) as cofactor.

The protein resides in the plastid. It localises to the chloroplast stroma. It carries out the reaction N(6)-carboxybiotinyl-L-lysyl-[protein] + acetyl-CoA = N(6)-biotinyl-L-lysyl-[protein] + malonyl-CoA. It functions in the pathway lipid metabolism; malonyl-CoA biosynthesis; malonyl-CoA from acetyl-CoA: step 1/1. Its function is as follows. Component of the acetyl coenzyme A carboxylase (ACC) complex. Biotin carboxylase (BC) catalyzes the carboxylation of biotin on its carrier protein (BCCP) and then the CO(2) group is transferred by the transcarboxylase to acetyl-CoA to form malonyl-CoA. The polypeptide is Acetyl-coenzyme A carboxylase carboxyl transferase subunit beta, chloroplastic (Citrus sinensis (Sweet orange)).